The chain runs to 473 residues: Photosystem II CP43 reaction center protein (473 aa).

Positions 1–14 (MKTLYSLRRFYPVE) are excised as a propeptide. Thr15 carries the N-acetylthreonine modification. Position 15 is a phosphothreonine (Thr15). Transmembrane regions (helical) follow at residues 69-93 (LFEV…PHLA), 134-155 (LLGP…KDRN), 178-200 (KALY…RKIT), 255-275 (KPFA…LSYS), and 291-312 (WFNN…ASQA). Glu367 contacts [CaMn4O5] cluster. Residues 447-471 (RARAAAAGFEKGIDRDFEPVLSMTP) traverse the membrane as a helical segment.

The protein belongs to the PsbB/PsbC family. PsbC subfamily. In terms of assembly, PSII is composed of 1 copy each of membrane proteins PsbA, PsbB, PsbC, PsbD, PsbE, PsbF, PsbH, PsbI, PsbJ, PsbK, PsbL, PsbM, PsbT, PsbX, PsbY, PsbZ, Psb30/Ycf12, at least 3 peripheral proteins of the oxygen-evolving complex and a large number of cofactors. It forms dimeric complexes. The cofactor is Binds multiple chlorophylls and provides some of the ligands for the Ca-4Mn-5O cluster of the oxygen-evolving complex. It may also provide a ligand for a Cl- that is required for oxygen evolution. PSII binds additional chlorophylls, carotenoids and specific lipids..

Its subcellular location is the plastid. It localises to the chloroplast thylakoid membrane. Its function is as follows. One of the components of the core complex of photosystem II (PSII). It binds chlorophyll and helps catalyze the primary light-induced photochemical processes of PSII. PSII is a light-driven water:plastoquinone oxidoreductase, using light energy to abstract electrons from H(2)O, generating O(2) and a proton gradient subsequently used for ATP formation. The chain is Photosystem II CP43 reaction center protein from Panax ginseng (Korean ginseng).